The sequence spans 307 residues: Protease HtpX homolog (307 aa).

A helical transmembrane segment spans residues 16–36 (LFMGVGYLIGGAAGAMIALVV). Histidine 130 provides a ligand contact to Zn(2+). Glutamate 131 is an active-site residue. Residue histidine 134 coordinates Zn(2+). The next 2 helical transmembrane spans lie at 145–165 (ITAT…FFGG) and 172–192 (GPGI…AMLV). Residue glutamate 201 coordinates Zn(2+). The disordered stretch occupies residues 278-307 (AGQSGSATPDPAPAPRGPWNGGAPRRGPWG).

This sequence belongs to the peptidase M48B family. It depends on Zn(2+) as a cofactor.

It is found in the cell inner membrane. The protein is Protease HtpX homolog of Nitrobacter hamburgensis (strain DSM 10229 / NCIMB 13809 / X14).